The chain runs to 439 residues: 23S rRNA (uracil(1939)-C(5))-methyltransferase RlmD (439 aa).

In terms of domain architecture, TRAM spans 10–68; it reads QKKLRAAFTTIVQDLDYQGLGVAKIQGKTWFIENALPQEQVQVQVIEEKRQYGLGRVQK. [4Fe-4S] cluster-binding residues include Cys81, Cys87, Cys90, and Cys168. Residues Gln271, Phe300, Asn305, Glu321, Asp348, and Asp369 each coordinate S-adenosyl-L-methionine. Catalysis depends on Cys395, which acts as the Nucleophile.

This sequence belongs to the class I-like SAM-binding methyltransferase superfamily. RNA M5U methyltransferase family. RlmD subfamily.

The catalysed reaction is uridine(1939) in 23S rRNA + S-adenosyl-L-methionine = 5-methyluridine(1939) in 23S rRNA + S-adenosyl-L-homocysteine + H(+). Catalyzes the formation of 5-methyl-uridine at position 1939 (m5U1939) in 23S rRNA. The protein is 23S rRNA (uracil(1939)-C(5))-methyltransferase RlmD of Histophilus somni (strain 129Pt) (Haemophilus somnus).